Consider the following 1349-residue polypeptide: DNA-directed RNA polymerase subunit beta' (1349 aa).

Residues cysteine 70, cysteine 72, cysteine 85, and cysteine 88 each coordinate Zn(2+). Residues aspartate 460, aspartate 462, and aspartate 464 each coordinate Mg(2+). Zn(2+) contacts are provided by cysteine 801, cysteine 875, cysteine 882, and cysteine 885.

Belongs to the RNA polymerase beta' chain family. As to quaternary structure, the RNAP catalytic core consists of 2 alpha, 1 beta, 1 beta' and 1 omega subunit. When a sigma factor is associated with the core the holoenzyme is formed, which can initiate transcription. Requires Mg(2+) as cofactor. Zn(2+) serves as cofactor.

It carries out the reaction RNA(n) + a ribonucleoside 5'-triphosphate = RNA(n+1) + diphosphate. Its function is as follows. DNA-dependent RNA polymerase catalyzes the transcription of DNA into RNA using the four ribonucleoside triphosphates as substrates. The chain is DNA-directed RNA polymerase subunit beta' from Desulfotalea psychrophila (strain LSv54 / DSM 12343).